The primary structure comprises 319 residues: Acetyl-coenzyme A carboxylase carboxyl transferase subunit beta, chloroplastic (319 aa).

Residues Leu-47 to Ser-319 form the CoA carboxyltransferase N-terminal domain. Zn(2+) is bound by residues Cys-51, Cys-54, Cys-70, and Cys-73. A C4-type zinc finger spans residues Cys-51–Cys-73.

Belongs to the AccD/PCCB family. In terms of assembly, acetyl-CoA carboxylase is a heterohexamer composed of biotin carboxyl carrier protein, biotin carboxylase and 2 subunits each of ACCase subunit alpha and ACCase plastid-coded subunit beta (accD). Zn(2+) serves as cofactor.

Its subcellular location is the plastid. The protein resides in the chloroplast stroma. The enzyme catalyses N(6)-carboxybiotinyl-L-lysyl-[protein] + acetyl-CoA = N(6)-biotinyl-L-lysyl-[protein] + malonyl-CoA. Its pathway is lipid metabolism; malonyl-CoA biosynthesis; malonyl-CoA from acetyl-CoA: step 1/1. Functionally, component of the acetyl coenzyme A carboxylase (ACC) complex. Biotin carboxylase (BC) catalyzes the carboxylation of biotin on its carrier protein (BCCP) and then the CO(2) group is transferred by the transcarboxylase to acetyl-CoA to form malonyl-CoA. The chain is Acetyl-coenzyme A carboxylase carboxyl transferase subunit beta, chloroplastic from Picea abies (Norway spruce).